Consider the following 359-residue polypeptide: Src kinase-associated phosphoprotein 1 (359 aa).

Residues 107 to 210 (NVIKQGYLEK…WVDQISFLLK (104 aa)) form the PH domain. A phosphotyrosine mark is found at Y142, Y219, and Y232. Over residues 219–237 (YEEDEEEEEKEETYDDIDG) the composition is skewed to acidic residues. Positions 219–239 (YEEDEEEEEKEETYDDIDGFD) are disordered. Y271 and Y295 each carry phosphotyrosine; by FYN. Residues 290 to 295 (RKGVDY) are interaction with FYB1. Residues 294-355 (DYASYYQGLW…PKEYLTTAFE (62 aa)) form the SH3 domain.

This sequence belongs to the SKAP family. As to quaternary structure, homodimer. Interacts with FYN. Interacts with PTPRC. Interacts with GRB2 when phosphorylated on Tyr-271. Interacts with FYB1, which is required for SKAP2 protein stability. Part of a complex consisting of SKAP1, FYB1 and CLNK. Interacts with RASGRP1. Interacts with FYB2. In terms of processing, phosphorylated on tyrosines. Phosphorylation by FYN on Tyr-271 is required for GRB2 interaction. Phosphorylation by FYN on Tyr-295 abolishes interaction with FYB1. Tyr-232 is dephosphorylated by PTPRC. In terms of tissue distribution, highly expressed in thymocytes and peripheral blood lymphocytes. Also expressed in spleen cells and testis. Present in T-cells (at protein level).

It localises to the cytoplasm. The protein localises to the nucleus. Its subcellular location is the cell membrane. Functionally, positively regulates T-cell receptor signaling by enhancing the MAP kinase pathway. Required for optimal conjugation between T-cells and antigen-presenting cells by promoting the clustering of integrin ITGAL on the surface of T-cells. May be involved in high affinity immunoglobulin epsilon receptor signaling in mast cells. In Homo sapiens (Human), this protein is Src kinase-associated phosphoprotein 1 (SKAP1).